We begin with the raw amino-acid sequence, 311 residues long: Glycine-betaine-binding protein (311 aa).

Positions Met-1 to Ala-23 are cleaved as a signal peptide.

It belongs to the OsmX family.

It localises to the periplasm. Binds glycine-betaine. In Pseudomonas aeruginosa (strain ATCC 15692 / DSM 22644 / CIP 104116 / JCM 14847 / LMG 12228 / 1C / PRS 101 / PAO1), this protein is Glycine-betaine-binding protein.